Reading from the N-terminus, the 307-residue chain is Leucine-rich repeat-containing protein 59 (307 aa).

Met-1 carries the post-translational modification N-acetylmethionine. Thr-2 carries the post-translational modification N-acetylthreonine; in Leucine-rich repeat-containing protein 59, N-terminally processed. The Cytoplasmic segment spans residues 2-244 (TKTGSKGGNL…KPPPRKHNRS (243 aa)). 5 LRR repeats span residues 10–31 (NLRD…NEVP), 40–62 (KATV…CGLT), 63–84 (HLVK…FGRL), 86–107 (NLQH…FAQL), and 109–128 (NLKW…AKVA). Ser-23 and Ser-25 each carry phosphoserine. Residue Lys-73 is modified to N6-succinyllysine. Lys-135 carries the N6-acetyllysine modification. A coiled-coil region spans residues 148–216 (MKAVQADQER…KASKREQEKK (69 aa)). The interval 150 to 242 (AVQADQERER…PRKPPPRKHN (93 aa)) is disordered. Over residues 154 to 221 (DQERERQRRL…EQEKKPKKET (68 aa)) the composition is skewed to basic and acidic residues. The segment covering 229–242 (SGSRPRKPPPRKHN) has biased composition (basic residues). Residues 245 to 265 (WAVLKGLLLLLLLCVAGGLVV) traverse the membrane as a helical segment. The Lumenal segment spans residues 266–307 (CRVTGLQQQPLCTSVNAIYDNAVQGLRHHEILQWVLQTDSQQ).

In terms of assembly, can form homodimers. Interacts with SGO1. Interacts with FGF1.

The protein localises to the microsome membrane. Its subcellular location is the endoplasmic reticulum membrane. The protein resides in the nucleus envelope. Its function is as follows. Required for nuclear import of FGF1, but not that of FGF2. Might regulate nuclear import of exogenous FGF1 by facilitating interaction with the nuclear import machinery and by transporting cytosolic FGF1 to, and possibly through, the nuclear pores. The sequence is that of Leucine-rich repeat-containing protein 59 (Lrrc59) from Rattus norvegicus (Rat).